The chain runs to 614 residues: Interleukin-18 receptor accessory protein (614 aa).

Positions 1–19 are cleaved as a signal peptide; that stretch reads MLCLGWVFLWFVAGEKTTG. Residues 20-356 lie on the Extracellular side of the membrane; sequence FNHSACATKK…RTIRLRKKEE (337 aa). Residue Asn-21 is glycosylated (N-linked (GlcNAc...) asparagine). A disulfide bridge connects residues Cys-46 and Cys-126. The disordered stretch occupies residues 59–78; sequence ASQLSPTQSPAHKPCSGSQK. 2 consecutive Ig-like C2-type domains span residues 148–234 and 250–352; these read PQRN…WTVR and PEIL…IRLR. A glycan (N-linked (GlcNAc...) asparagine) is linked at Asn-151. 3 cysteine pairs are disulfide-bonded: Cys-154–Cys-179, Cys-174–Cys-220, and Cys-179–Cys-220. N-linked (GlcNAc...) asparagine glycosylation occurs at Asn-227. A disulfide bridge links Cys-272 with Cys-336. The N-linked (GlcNAc...) asparagine glycan is linked to Asn-344. Residues 357 to 377 form a helical membrane-spanning segment; the sequence is VVFVYILLGTALMLVGVLVAA. Over 378–614 the chain is Cytoplasmic; sequence AFLYWYWIEV…LLLYSDQKRC (237 aa). One can recognise a TIR domain in the interval 405-558; that stretch reads KEFDAFVSYS…RFWTQIRYHM (154 aa). Glu-492 is a catalytic residue.

This sequence belongs to the interleukin-1 receptor family. In terms of assembly, forms a ternary complex with IL18 and IL18R1. Within this complex, IL18R1 is involved in ligand-binding and IL18RAP in signaling leading to NF-kappa-B and JNK activation.

The protein resides in the cell membrane. The catalysed reaction is NAD(+) + H2O = ADP-D-ribose + nicotinamide + H(+). Its function is as follows. Within the IL18 receptor complex, does not mediate IL18-binding, but involved in IL18-dependent signal transduction, leading to NF-kappa-B and JNK activation. May play a role in IL18-mediated IFNG synthesis from T-helper 1 (Th1) cells. In Mus musculus (Mouse), this protein is Interleukin-18 receptor accessory protein.